The following is a 245-amino-acid chain: 5-oxoprolinase subunit A (245 aa).

This sequence belongs to the LamB/PxpA family. In terms of assembly, forms a complex composed of PxpA, PxpB and PxpC.

The enzyme catalyses 5-oxo-L-proline + ATP + 2 H2O = L-glutamate + ADP + phosphate + H(+). Catalyzes the cleavage of 5-oxoproline to form L-glutamate coupled to the hydrolysis of ATP to ADP and inorganic phosphate. This Serratia proteamaculans (strain 568) protein is 5-oxoprolinase subunit A.